The primary structure comprises 93 residues: MPRSLKKGVFVDDHLLEKVLELNAKGEKRLIKTWSRRSTIVPEMVGHTIAVYNGKQHVPVYITENMVGHKLGEFAPTRTYRGHGKEAKATKKK.

The protein belongs to the universal ribosomal protein uS19 family.

Functionally, protein S19 forms a complex with S13 that binds strongly to the 16S ribosomal RNA. The polypeptide is Small ribosomal subunit protein uS19 (rpsS) (Thermus thermophilus (strain ATCC BAA-163 / DSM 7039 / HB27)).